We begin with the raw amino-acid sequence, 126 residues long: Large ribosomal subunit protein bL12 (126 aa).

It belongs to the bacterial ribosomal protein bL12 family. Homodimer. Part of the ribosomal stalk of the 50S ribosomal subunit. Forms a multimeric L10(L12)X complex, where L10 forms an elongated spine to which 2 to 4 L12 dimers bind in a sequential fashion. Binds GTP-bound translation factors.

Forms part of the ribosomal stalk which helps the ribosome interact with GTP-bound translation factors. Is thus essential for accurate translation. The chain is Large ribosomal subunit protein bL12 from Nitrosococcus oceani (strain ATCC 19707 / BCRC 17464 / JCM 30415 / NCIMB 11848 / C-107).